A 92-amino-acid chain; its full sequence is Large ribosomal subunit protein bL28 (92 aa).

The protein belongs to the bacterial ribosomal protein bL28 family.

This is Large ribosomal subunit protein bL28 from Borreliella burgdorferi (strain ATCC 35210 / DSM 4680 / CIP 102532 / B31) (Borrelia burgdorferi).